Reading from the N-terminus, the 260-residue chain is Trialysin (260 aa).

Residues 1-19 (MSKFWLLLLLVAAFQFAHS) form the signal peptide. A propeptide spans 20–55 (YPAAEYELDETTNDEVRQFIGDGYFEDEGDDGDEER) (removed in mature form, probably by the serine protease triapsin).

The protein belongs to the redulysin-like family. Expressed in salivary glands.

The protein resides in the secreted. It is found in the target cell membrane. Pore-forming protein that induces lysis of T.cruzi trypomastigotes, bacteria E.coli and human red blood cells. The parasite lysis is much more important than the hemolysis, probably due to difference in membrane composition. Its action on protozoan parasites and bacteria may indicate a role in the control of microorganism growth in the salivary glands. In Triatoma infestans (Assassin bug), this protein is Trialysin.